The sequence spans 210 residues: Imidazoleglycerol-phosphate dehydratase (210 aa).

A disordered region spans residues 185–210 (PRRGGSIPSSKGVLEQAGDNNTEKSK).

The protein belongs to the imidazoleglycerol-phosphate dehydratase family.

Its subcellular location is the cytoplasm. It carries out the reaction D-erythro-1-(imidazol-4-yl)glycerol 3-phosphate = 3-(imidazol-4-yl)-2-oxopropyl phosphate + H2O. Its pathway is amino-acid biosynthesis; L-histidine biosynthesis; L-histidine from 5-phospho-alpha-D-ribose 1-diphosphate: step 6/9. This Prochlorococcus marinus (strain SARG / CCMP1375 / SS120) protein is Imidazoleglycerol-phosphate dehydratase.